Consider the following 876-residue polypeptide: Protein TORMOZ EMBRYO DEFECTIVE (876 aa).

WD repeat units lie at residues 58–97, 100–139, 142–183, 190–229, 255–294, 308–347, 356–396, 399–441, 444–484, 497–536, 539–580, 581–620, and 623–662; these read GESDTLTALALSPDDKLLFSAGHSRQIRVWDLETLKCIRS, GHEGPVMGMACHASGGLLATAGADRKVLVWDVDGGFCTHY, GHKG…TEKK, KHFSAVTSIALSEDGLTLFSAGRDKVVNLWDLHDYSCKAT, LDQKKSKKKESDSQATYFITVGERGVVRIWKSEGSICLYE, ESKRGFTAAAMLPSDHGLLCVTADQQFFFYSVVENVEETE, GYNE…CSYV, GHKE…CIGV, GHNG…EDSE, AHDKDINSVAVARNDSLVCTGSEDRTASIWRLPDLVHVVT, GHKR…KTFE, GHTSSVLRASFITDGTQFVSCGADGLLKLWNVNTSECIAT, and QHEDKVWALAVGKKTEMIATGGGDAVINLWHDSTASDKED. Residues 816–876 are disordered; sequence VETEYPKDEK…AEAQGSVIAV (61 aa). Residues 819–831 show a composition bias toward basic and acidic residues; that stretch reads EYPKDEKKKEKDV. The Nuclear localization signal motif lies at 848–855; it reads SRKRKSQK. Residues 849–864 show a composition bias toward basic residues; sequence RKRKSQKSKGKSNKKR.

Preferentially expressed in dividing cells in a variety of tissues and meristematic regions.

It localises to the nucleus. The protein resides in the nucleolus. Functionally, essential protein involved in the regulation of cell division planes during embryogenesis which defines cell patterning, especially longitudinal division planes of the proembryo, probably via the regulation of embryo patterning genes expression patterns. This chain is Protein TORMOZ EMBRYO DEFECTIVE, found in Arabidopsis thaliana (Mouse-ear cress).